Consider the following 266-residue polypeptide: Norfluorocurarine synthase 1 (266 aa).

The AB hydrolase-1 domain maps to 11-121; the sequence is HFVLVHGAGH…VMPDAVHPPS (111 aa). Catalysis depends on residues Ser86, Asp216, and His244.

It belongs to the AB hydrolase superfamily. As to quaternary structure, homodimer. Mainly expressed in roots.

It carries out the reaction 17-dehydropreakuammicine + H2O = norfluorocurarine + methanol + CO2. It participates in alkaloid biosynthesis. Functionally, hydrolase involved in the biosynthesis of curare monoterpene indole alkaloids (MIAs), natural products such as strychnine, a neurotoxic compound used as a pesticide to control rodents, and its pharmacologically active derivatives, including brucine, used to regulate blood pressure. Curare alkaloids act as animal glycine receptor antagonists. Catalyzes the conversion of dehydropreakuammicine to norfluorocurarine. The protein is Norfluorocurarine synthase 1 of Strychnos nux-vomica (Poison nut).